Reading from the N-terminus, the 87-residue chain is Acyl-CoA-binding protein (87 aa).

Ser2 is modified (N-acetylserine). An ACB domain is found at Ser2–Ile87. The residue at position 8 (Lys8) is an N6-acetyllysine; alternate. Lys8 carries the post-translational modification N6-succinyllysine; alternate. Lys14 is an an acyl-CoA binding site. Residue Lys17 is modified to N6-succinyllysine. An N6-acetyllysine modification is found at Lys19. Phosphotyrosine is present on Tyr29. An acyl-CoA-binding positions include Tyr29 to Lys33, Lys51, Lys55, and Tyr74. The residue at position 51 (Lys51) is an N6-acetyllysine. An N6-acetyllysine; alternate modification is found at Lys55. Lys55 carries the N6-succinyllysine; alternate modification. Position 55 is an N6-(2-hydroxyisobutyryl)lysine; alternate (Lys55). Lys55 is subject to N6-malonyllysine; alternate. Lys77 bears the N6-acetyllysine; alternate mark. An N6-succinyllysine; alternate modification is found at Lys77.

This sequence belongs to the ACBP family. In terms of assembly, monomer.

It is found in the endoplasmic reticulum. The protein resides in the golgi apparatus. Binds medium- and long-chain acyl-CoA esters with very high affinity and may function as an intracellular carrier of acyl-CoA esters. It is also able to displace diazepam from the benzodiazepine (BZD) recognition site located on the GABA type A receptor. It is therefore possible that this protein also acts as a neuropeptide to modulate the action of the GABA receptor. Functionally, DBI(32-86) has antibacterial properties. The polypeptide is Acyl-CoA-binding protein (DBI) (Sus scrofa (Pig)).